A 484-amino-acid chain; its full sequence is Aldehyde dehydrogenase family 3 member A2 (484 aa).

Residues 1-463 lie on the Cytoplasmic side of the membrane; the sequence is MERQVLRLRQ…FLLKQFNKGR (463 aa). 185 to 190 is a binding site for NAD(+); sequence GNTAVG. Residues Glu-207 and Cys-241 contribute to the active site. Ser-293 carries the post-translational modification Phosphoserine. The chain crosses the membrane as a helical span at residues 464–484; it reads LGMLLFVCLVAVAAVIVKDQL. The Prevents secretion from ER motif lies at 481-484; the sequence is KDQL.

Belongs to the aldehyde dehydrogenase family. In terms of assembly, homodimer.

It is found in the membrane. The protein localises to the microsome membrane. The protein resides in the endoplasmic reticulum membrane. The catalysed reaction is an aldehyde + NAD(+) + H2O = a carboxylate + NADH + 2 H(+). The enzyme catalyses a fatty aldehyde + NAD(+) + H2O = a fatty acid + NADH + 2 H(+). It catalyses the reaction hexadecanoate + NADH + 2 H(+) = hexadecanal + NAD(+) + H2O. It carries out the reaction octanal + NAD(+) + H2O = octanoate + NADH + 2 H(+). The catalysed reaction is (2E)-hexadecenal + NAD(+) + H2O = (E)-hexadec-2-enoate + NADH + 2 H(+). The enzyme catalyses 22-oxodocosanoate + NAD(+) + H2O = docosanedioate + NADH + 2 H(+). It catalyses the reaction 2,6,10,14-tetramethylpentadecanal + NAD(+) + H2O = 2,6,10,14-tetramethylpentadecanoate + NADH + 2 H(+). It carries out the reaction octadecanal + NAD(+) + H2O = octadecanoate + NADH + 2 H(+). The catalysed reaction is dodecanoate + NADH + 2 H(+) = dodecanal + NAD(+) + H2O. The enzyme catalyses decanal + NAD(+) + H2O = decanoate + NADH + 2 H(+). It catalyses the reaction tetradecanal + NAD(+) + H2O = tetradecanoate + NADH + 2 H(+). It carries out the reaction heptanal + NAD(+) + H2O = heptanoate + NADH + 2 H(+). The catalysed reaction is (2E,6E)-farnesal + NAD(+) + H2O = (2E,6E)-farnesoate + NADH + 2 H(+). Functionally, catalyzes the oxidation of medium and long-chain aliphatic aldehydes to fatty acids. Active on a variety of saturated and unsaturated aliphatic aldehydes between 6 and 24 carbons in length. Responsible for conversion of the sphingosine 1-phosphate (S1P) degradation product hexadecenal to hexadecenoic acid. The protein is Aldehyde dehydrogenase family 3 member A2 (Aldh3a2) of Mus musculus (Mouse).